A 151-amino-acid polypeptide reads, in one-letter code: Small ribosomal subunit protein uS15 (151 aa).

The protein belongs to the universal ribosomal protein uS15 family.

This chain is Small ribosomal subunit protein uS15 (RPS13), found in Zea mays (Maize).